The primary structure comprises 280 residues: 3-methyl-2-oxobutanoate hydroxymethyltransferase (280 aa).

2 residues coordinate Mg(2+): D49 and D88. 3-methyl-2-oxobutanoate-binding positions include D49–S50, D88, and K118. A Mg(2+)-binding site is contributed by E120. The active-site Proton acceptor is the E187.

This sequence belongs to the PanB family. Homodecamer; pentamer of dimers. Mg(2+) is required as a cofactor.

The protein localises to the cytoplasm. It catalyses the reaction 3-methyl-2-oxobutanoate + (6R)-5,10-methylene-5,6,7,8-tetrahydrofolate + H2O = 2-dehydropantoate + (6S)-5,6,7,8-tetrahydrofolate. The protein operates within cofactor biosynthesis; (R)-pantothenate biosynthesis; (R)-pantoate from 3-methyl-2-oxobutanoate: step 1/2. In terms of biological role, catalyzes the reversible reaction in which hydroxymethyl group from 5,10-methylenetetrahydrofolate is transferred onto alpha-ketoisovalerate to form ketopantoate. The chain is 3-methyl-2-oxobutanoate hydroxymethyltransferase from Xanthobacter autotrophicus (strain ATCC BAA-1158 / Py2).